The following is a 438-amino-acid chain: Myosin light chain kinase, smooth muscle (438 aa).

The Protein kinase domain maps to 1–241; that stretch reads FRLVEKKTGK…CTQCLQHPWL (241 aa). ATP is bound at residue lysine 15. Position 97 is a phosphotyrosine; by ABL1 (tyrosine 97). Aspartate 107 acts as the Proton acceptor in catalysis. Tyrosine 157 is modified (phosphotyrosine; by ABL1). Positions 233–296 are calmodulin-binding; it reads TQCLQHPWLX…SGLSGRKSST (64 aa). 5 positions are modified to phosphoserine: serine 281, serine 282, serine 294, serine 295, and serine 298. The telokin stretch occupies residues 283–438; the sequence is MAMISGLSGR…GEGGEEEEEE (156 aa). Positions 289–309 are disordered; that stretch reads LSGRKSSTGSPTSPLNAEKLE. A compositionally biased stretch (polar residues) spans 292 to 303; the sequence is RKSSTGSPTSPL. At threonine 300 the chain carries Phosphothreonine. Serine 301 carries the post-translational modification Phosphoserine. The Ig-like C2-type domain occupies 331–420; sequence PYFSKTIRDL…GEATCTAELI (90 aa). Cysteine 352 and cysteine 404 are oxidised to a cystine.

This sequence belongs to the protein kinase superfamily. CAMK Ser/Thr protein kinase family. As to quaternary structure, all isoforms including Telokin bind calmodulin. Interacts with SVIL. Interacts with CTTN; this interaction is reduced during thrombin-induced endothelial cell (EC) contraction but is promoted by the barrier-protective agonist sphingosine 1-phosphate (S1P) within lamellipodia. A complex made of ABL1, CTTN and MYLK regulates cortical actin-based cytoskeletal rearrangement critical to sphingosine 1-phosphate (S1P)-mediated endothelial cell (EC) barrier enhancement. Binds to NAA10/ARD1 and PTK2B/PYK2. The cofactor is Mg(2+). Requires Ca(2+) as cofactor. The C-terminus is deglutamylated by AGTPBP1/CCP1, AGBL1/CCP4 and AGBL4/CCP6, leading to the formation of Myosin light chain kinase, smooth muscle, deglutamylated form. The consequences of C-terminal deglutamylation are unknown. In terms of processing, can probably be down-regulated by phosphorylation. Tyrosine phosphorylation by ABL1 increases kinase activity, reverses MLCK-mediated inhibition of Arp2/3-mediated actin polymerization, and enhances CTTN-binding. Phosphorylation by SRC promotes CTTN binding.

Its subcellular location is the cytoplasm. It is found in the cell projection. It localises to the lamellipodium. The protein localises to the cleavage furrow. The protein resides in the cytoskeleton. Its subcellular location is the stress fiber. It carries out the reaction L-seryl-[myosin light chain] + ATP = O-phospho-L-seryl-[myosin light chain] + ADP + H(+). The catalysed reaction is L-threonyl-[myosin light chain] + ATP = O-phospho-L-threonyl-[myosin light chain] + ADP + H(+). Functionally, calcium/calmodulin-dependent myosin light chain kinase implicated in smooth muscle contraction via phosphorylation of myosin light chains (MLC). Also regulates actin-myosin interaction through a non-kinase activity. Phosphorylates PTK2B/PYK2 and myosin light-chains. Involved in the inflammatory response (e.g. apoptosis, vascular permeability, leukocyte diapedesis), cell motility and morphology, airway hyperreactivity and other activities relevant to asthma. Required for tonic airway smooth muscle contraction that is necessary for physiological and asthmatic airway resistance. Necessary for gastrointestinal motility. Implicated in the regulation of endothelial as well as vascular permeability, probably via the regulation of cytoskeletal rearrangements. In the nervous system it has been shown to control the growth initiation of astrocytic processes in culture and to participate in transmitter release at synapses formed between cultured sympathetic ganglion cells. Critical participant in signaling sequences that result in fibroblast apoptosis. Plays a role in the regulation of epithelial cell survival. Required for epithelial wound healing, especially during actomyosin ring contraction during purse-string wound closure. Mediates RhoA-dependent membrane blebbing. Triggers TRPC5 channel activity in a calcium-dependent signaling, by inducing its subcellular localization at the plasma membrane. Promotes cell migration (including tumor cells) and tumor metastasis. PTK2B/PYK2 activation by phosphorylation mediates ITGB2 activation and is thus essential to trigger neutrophil transmigration during acute lung injury (ALI). May regulate optic nerve head astrocyte migration. Probably involved in mitotic cytoskeletal regulation. Regulates tight junction probably by modulating ZO-1 exchange in the perijunctional actomyosin ring. Mediates burn-induced microvascular barrier injury; triggers endothelial contraction in the development of microvascular hyperpermeability by phosphorylating MLC. Essential for intestinal barrier dysfunction. Mediates Giardia spp.-mediated reduced epithelial barrier function during giardiasis intestinal infection via reorganization of cytoskeletal F-actin and tight junctional ZO-1. Necessary for hypotonicity-induced Ca(2+) entry and subsequent activation of volume-sensitive organic osmolyte/anion channels (VSOAC) in cervical cancer cells. This is Myosin light chain kinase, smooth muscle (MYLK) from Ovis aries (Sheep).